Reading from the N-terminus, the 2235-residue chain is Mediator of RNA polymerase II transcription subunit 12 (2235 aa).

Residues 16–35 (SAIGGASARDSGRADSSSIG) show a composition bias toward low complexity. Disordered regions lie at residues 16 to 80 (SAIG…EENL), 268 to 293 (FPAQQTRDRSPQMLYTGSMQKNSPAS), 835 to 858 (SVKRSSGSVYSKMDQPEATPGCED), 1900 to 1959 (SSVT…SPAA), 2134 to 2160 (GSTAAAGTNQRNSPAISKSGTAAAQGK), and 2183 to 2202 (WTLLEDGTSSGLSSSNASNS). Over residues 280–293 (MLYTGSMQKNSPAS) the composition is skewed to polar residues. A compositionally biased stretch (polar residues) spans 1900–1916 (SSVTNRSTTSNKQMGTA). A compositionally biased stretch (low complexity) spans 1917–1927 (SSGSEISSNKG). A compositionally biased stretch (polar residues) spans 2134 to 2155 (GSTAAAGTNQRNSPAISKSGTA). Residues 2191–2202 (SSGLSSSNASNS) are compositionally biased toward low complexity.

Belongs to the Mediator complex subunit 12 family. As to quaternary structure, component of the Mediator complex. In terms of tissue distribution, ubiquitous. Higher expression in vascular tissue, shoot apex and developing floral organs.

The protein resides in the nucleus. Component of the Mediator complex, a coactivator involved in the regulated transcription of nearly all RNA polymerase II-dependent genes. Mediator functions as a bridge to convey information from gene-specific regulatory proteins to the basal RNA polymerase II transcription machinery. The Mediator complex, having a compact conformation in its free form, is recruited to promoters by direct interactions with regulatory proteins and serves for the assembly of a functional preinitiation complex with RNA polymerase II and the general transcription factors. Flowering regulator which suppresses FLC expression, promotes FT and TSF expression and up-regulates SOC1 and FUL mainly in an FT-dependent manner under long-day conditions. Involved in diverse developmental aspects through gene regulation and modulation of the auxin response. Acts closely together with MAB13. Involved in the regulation of embryo patterning and cotyledon organogenesis by transiently repressing a transcriptional program that interferes with this process. This chain is Mediator of RNA polymerase II transcription subunit 12 (MED12), found in Arabidopsis thaliana (Mouse-ear cress).